Here is a 927-residue protein sequence, read N- to C-terminus: Heat shock protein hsp98 (927 aa).

In terms of domain architecture, Clp R spans 2-162 (TSKMEFTDRA…TDAIQAIRGT (161 aa)). 2 repeat regions span residues 7–87 (FTDR…LVRL) and 99–162 (MAPS…IRGT). An NBD1 region spans residues 179 to 428 (LAKFTIDMTA…AVRVARESQP (250 aa)). 224–231 (GEPGVGKT) provides a ligand contact to ATP. A coiled-coil region spans residues 429 to 553 (EIIDSLERKL…AALNAAAAET (125 aa)). The disordered stretch occupies residues 454–473 (EASKARLEQAKKDAENVEEE). An NBD2 region spans residues 562–752 (VGPDQINEIV…IVVMTSNLGA (191 aa)). Residue 635-642 (GPSGTGKT) coordinates ATP. The tract at residues 908 to 927 (EDAVDEVAPESEMDEDLYDD) is disordered.

Belongs to the ClpA/ClpB family. Homohexamer, forming a ring with a central pore.

The protein localises to the cytoplasm. It localises to the nucleus. In terms of biological role, required, in concert with Hsp40 and Hsp70 and small Hsps, for the dissociation, resolubilization and refolding of aggregates of damaged proteins after heat or other environmental stresses. Extracts proteins from aggregates by unfolding and threading them in an ATP-dependent process through the axial channel of the protein hexamer, after which they can be refolded by components of the Hsp70/Hsp40 chaperone system. This is Heat shock protein hsp98 (hsp98) from Neurospora crassa (strain ATCC 24698 / 74-OR23-1A / CBS 708.71 / DSM 1257 / FGSC 987).